Consider the following 1706-residue polypeptide: Histone acetyltransferase HAC12 (1706 aa).

Disordered stretches follow at residues 1 to 33, 251 to 284, 397 to 456, and 524 to 543; these read MNVQ…MQNL, TNNN…NSHM, VSRV…LGKT, and QNSQ…SDSS. Residues 397-406 are compositionally biased toward polar residues; it reads VSRVNSSLSH. Residues 407–434 show a composition bias toward low complexity; the sequence is QQQFQQPPNRFQQQPNQIQQQQQQFLNQ. The segment at 637 to 716 adopts a TAZ-type 1 zinc-finger fold; the sequence is HDPKFKNQQR…DPRCPVCVPV (80 aa). Residues 791 to 909 form a disordered region; that stretch reads TESCKSSIVS…PELTSKSRKP (119 aa). A compositionally biased stretch (polar residues) spans 794–805; the sequence is CKSSIVSTTEAD. Basic and acidic residues-rich tracts occupy residues 809–829 and 870–896; these read DAER…KVEI and PKQE…KEEL. The segment at 998 to 1075 adopts a PHD-type zinc-finger fold; sequence HYFCIPCYNE…EYTCPYCYVI (78 aa). In terms of domain architecture, CBP/p300-type HAT spans 1090–1526; that stretch reads VLGAKDLPRT…VLYHLHNPTA (437 aa). Residues 1213–1215, 1232–1233, and W1288 each bind acetyl-CoA; these read LDS and RT. ZZ-type zinc fingers lie at residues 1408-1471 and 1528-1581; these read HLQH…IADI and AFVT…SLAD. Residues C1413, C1416, C1428, C1431, C1437, C1440, H1453, H1461, C1533, C1536, C1548, C1551, C1557, C1560, H1569, and H1571 each contribute to the Zn(2+) site. Residues 1588–1671 form a TAZ-type 2 zinc finger; the sequence is EARQLRVLQL…ECDVPRCGDL (84 aa).

The protein resides in the nucleus. The enzyme catalyses L-lysyl-[protein] + acetyl-CoA = N(6)-acetyl-L-lysyl-[protein] + CoA + H(+). In terms of biological role, acetyltransferase enzyme. Acetylates histones, giving a specific tag for transcriptional activation. In Arabidopsis thaliana (Mouse-ear cress), this protein is Histone acetyltransferase HAC12 (HAC12).